The primary structure comprises 119 residues: C-X-C motif chemokine 17 (119 aa).

The signal sequence occupies residues 1-21 (MKVLISSLLLLLPLMLMSMVS). Disulfide bonds link Cys-75-Cys-103 and Cys-77-Cys-110. The tract at residues 81 to 100 (KGNVKKTRHQRHHRKPNKHS) is disordered. A compositionally biased stretch (basic residues) spans 82 to 100 (GNVKKTRHQRHHRKPNKHS).

It belongs to the intercrine alpha (chemokine CxC) family. Likely to undergo an endoproteolytic process to form a four-cysteine-containing mature peptide with a canonical CXC chemokine scaffold after secretion. As to expression, detected in trachea, stomach, lung and skeletal muscle. Detected in intestine and in normal and asthmatic lung (at protein level). Breast tumors showed 3- to 24-fold up-regulation.

It localises to the secreted. Chemokine that acts as a chemoattractant for monocytes, macrophages and dendritic cells. Plays a role in angiogenesis and possibly in the development of tumors. Acts as an anti-inflammatory in the stomach. May play a role in the innate defense against infections. Activates the C-X-C chemokine receptor GPR35 to induce a rapid and transient rise in the level of intracellular calcium ions. In terms of biological role, seems to exhibit much higher chemoattractant potency on monocytes and macrophages than 6-Cys CXCL17. In Homo sapiens (Human), this protein is C-X-C motif chemokine 17 (CXCL17).